The following is a 353-amino-acid chain: Nicotinate-nucleotide--dimethylbenzimidazole phosphoribosyltransferase (353 aa).

The active-site Proton acceptor is the Glu318.

It belongs to the CobT family.

The catalysed reaction is 5,6-dimethylbenzimidazole + nicotinate beta-D-ribonucleotide = alpha-ribazole 5'-phosphate + nicotinate + H(+). It functions in the pathway nucleoside biosynthesis; alpha-ribazole biosynthesis; alpha-ribazole from 5,6-dimethylbenzimidazole: step 1/2. In terms of biological role, catalyzes the synthesis of alpha-ribazole-5'-phosphate from nicotinate mononucleotide (NAMN) and 5,6-dimethylbenzimidazole (DMB). This Roseiflexus sp. (strain RS-1) protein is Nicotinate-nucleotide--dimethylbenzimidazole phosphoribosyltransferase.